Here is a 348-residue protein sequence, read N- to C-terminus: tRNA N6-adenosine threonylcarbamoyltransferase (348 aa).

Fe cation-binding residues include histidine 116 and histidine 120. Substrate is bound by residues glutamine 138–glycine 142, aspartate 171, glycine 184, aspartate 188, and asparagine 277. Aspartate 309 serves as a coordination point for Fe cation.

The protein belongs to the KAE1 / TsaD family. Fe(2+) is required as a cofactor.

The protein localises to the cytoplasm. It catalyses the reaction L-threonylcarbamoyladenylate + adenosine(37) in tRNA = N(6)-L-threonylcarbamoyladenosine(37) in tRNA + AMP + H(+). Its function is as follows. Required for the formation of a threonylcarbamoyl group on adenosine at position 37 (t(6)A37) in tRNAs that read codons beginning with adenine. Is involved in the transfer of the threonylcarbamoyl moiety of threonylcarbamoyl-AMP (TC-AMP) to the N6 group of A37, together with TsaE and TsaB. TsaD likely plays a direct catalytic role in this reaction. This is tRNA N6-adenosine threonylcarbamoyltransferase from Lactobacillus johnsonii (strain CNCM I-12250 / La1 / NCC 533).